The primary structure comprises 202 residues: Solute carrier family 66 member 3 (202 aa).

A signal peptide spans 1 to 19; that stretch reads MEAGLLWFCNWSTLGVCAA. 4 helical membrane-spanning segments follow: residues 33-53, 64-84, 94-114, and 171-191; these read SARGISLPSLLLELAGFLVFL, LTYLEYPILIAQDIVLLLFVF, LPYMAVFVSSWFILSLQKWII, and LTILIRFVIMLALNIWVTATV.

The protein resides in the membrane. In Mus musculus (Mouse), this protein is Solute carrier family 66 member 3 (Slc66a3).